The following is a 96-amino-acid chain: CRISPR-associated endoribonuclease Cas2 1 (96 aa).

Residue D8 coordinates Mg(2+).

The protein belongs to the CRISPR-associated endoribonuclease Cas2 protein family. Homodimer, forms a heterotetramer with a Cas1 homodimer. The cofactor is Mg(2+).

Functionally, CRISPR (clustered regularly interspaced short palindromic repeat), is an adaptive immune system that provides protection against mobile genetic elements (viruses, transposable elements and conjugative plasmids). CRISPR clusters contain sequences complementary to antecedent mobile elements and target invading nucleic acids. CRISPR clusters are transcribed and processed into CRISPR RNA (crRNA). Functions as a ssRNA-specific endoribonuclease. Involved in the integration of spacer DNA into the CRISPR cassette. This chain is CRISPR-associated endoribonuclease Cas2 1, found in Moorella thermoacetica (strain ATCC 39073 / JCM 9320).